Consider the following 340-residue polypeptide: Formimidoylglutamase (340 aa).

The Mn(2+) site is built by H129, D160, H162, D164, D257, and D259.

Belongs to the arginase family. The cofactor is Mn(2+).

It carries out the reaction N-formimidoyl-L-glutamate + H2O = formamide + L-glutamate. It functions in the pathway amino-acid degradation; L-histidine degradation into L-glutamate; L-glutamate from N-formimidoyl-L-glutamate (hydrolase route): step 1/1. In terms of biological role, catalyzes the conversion of N-formimidoyl-L-glutamate to L-glutamate and formamide. This Vibrio parahaemolyticus serotype O3:K6 (strain RIMD 2210633) protein is Formimidoylglutamase.